Consider the following 430-residue polypeptide: Adenylosuccinate synthetase (430 aa).

GTP is bound by residues 12–18 and 40–42; these read GDEGKGK and GHT. Aspartate 13 serves as the catalytic Proton acceptor. Residues aspartate 13 and glycine 40 each contribute to the Mg(2+) site. IMP is bound by residues 13-16, 38-41, threonine 130, arginine 144, glutamine 224, threonine 239, and arginine 303; these read DEGK and NAGH. Histidine 41 serves as the catalytic Proton donor. 299–305 provides a ligand contact to substrate; sequence TVTGRKR. GTP is bound by residues arginine 305, 331–333, and 413–415; these read KLD and STS.

It belongs to the adenylosuccinate synthetase family. In terms of assembly, homodimer. Requires Mg(2+) as cofactor.

The protein resides in the cytoplasm. It catalyses the reaction IMP + L-aspartate + GTP = N(6)-(1,2-dicarboxyethyl)-AMP + GDP + phosphate + 2 H(+). It functions in the pathway purine metabolism; AMP biosynthesis via de novo pathway; AMP from IMP: step 1/2. Functionally, plays an important role in the de novo pathway of purine nucleotide biosynthesis. Catalyzes the first committed step in the biosynthesis of AMP from IMP. In Cereibacter sphaeroides (strain ATCC 17029 / ATH 2.4.9) (Rhodobacter sphaeroides), this protein is Adenylosuccinate synthetase.